The sequence spans 67 residues: Probable pilin MJ1400 (67 aa).

A propeptide spanning residues 1-13 (MKFIMKFIKSNKG) is cleaved from the precursor. The QXSXEXXXL motif lies at 14 to 22 (QISLEFSLL).

Post-translationally, the N-terminus is cleaved by the prepilin peptidase EppA, which recognizes the class III signal sequence.

It localises to the secreted. The protein localises to the cell surface. It is found in the fimbrium. The chain is Probable pilin MJ1400 from Methanocaldococcus jannaschii (strain ATCC 43067 / DSM 2661 / JAL-1 / JCM 10045 / NBRC 100440) (Methanococcus jannaschii).